Consider the following 737-residue polypeptide: Polyribonucleotide nucleotidyltransferase (737 aa).

Mg(2+) is bound by residues D489 and D495. Residues 556-615 form the KH domain; that stretch reads PKIDTIKIDVDKIKIVIGKGGETIDKIIAETGVKIDIDEEGNVSIYSSDQDAINRAKEII. An S1 motif domain is found at 625–693; it reads DEVYRAKVVR…EKGRIDASMK (69 aa). Positions 691-737 are disordered; sequence SMKALLPRPPKPEHDEKGEKSERPHRPRHQKDHKPKKEFTETPKDSE. A compositionally biased stretch (basic and acidic residues) spans 700–714; that stretch reads PKPEHDEKGEKSERP. Positions 715-724 are enriched in basic residues; that stretch reads HRPRHQKDHK. Residues 725–737 are compositionally biased toward basic and acidic residues; the sequence is PKKEFTETPKDSE.

Belongs to the polyribonucleotide nucleotidyltransferase family. Mg(2+) serves as cofactor.

Its subcellular location is the cytoplasm. The catalysed reaction is RNA(n+1) + phosphate = RNA(n) + a ribonucleoside 5'-diphosphate. Functionally, involved in mRNA degradation. Catalyzes the phosphorolysis of single-stranded polyribonucleotides processively in the 3'- to 5'-direction. The polypeptide is Polyribonucleotide nucleotidyltransferase (Streptococcus pneumoniae (strain JJA)).